The primary structure comprises 403 residues: Peroxisomal membrane protein PEX13 (403 aa).

A compositionally biased stretch (pro residues) spans 1-11; the sequence is MASQPPPPPKP. The segment at 1 to 68 is disordered; that stretch reads MASQPPPPPK…PSQQTGSSSV (68 aa). Over 1 to 134 the chain is Peroxisomal matrix; the sequence is MASQPPPPPK…SSRGAFQSIE (134 aa). Polar residues predominate over residues 59 to 68; that stretch reads PSQQTGSSSV. A helical transmembrane segment spans residues 135 to 155; that stretch reads SIVHAFASVSMMMDATFSAVY. Residues 145–233 are targeting to peroxisomes; it reads MMMDATFSAV…EDRAATSAKS (89 aa). Residues 156-174 lie on the Cytoplasmic side of the membrane; that stretch reads NSFRAVLDVANHFSRLKIH. The helical transmembrane segment at 175–192 threads the bilayer; that stretch reads FTKVFSAFALVRTIRYLY. The segment at 175 to 196 is interaction with PEX19; sequence FTKVFSAFALVRTIRYLYRRLQ. Residues 193–233 are Peroxisomal matrix-facing; the sequence is RRLQRMLGLRRGSENEDLWAESEGTVACLGAEDRAATSAKS. Residues 234–254 form a helical membrane-spanning segment; sequence WPIFLFFAVILGGPYLIWKLL. Over 255 to 403 the chain is Cytoplasmic; that stretch reads STHSDEVTDS…IGKDGEKQDL (149 aa). Positions 272–336 constitute an SH3 domain; it reads DDHVVARAEY…PANYVKILGK (65 aa). Serine 354 is modified (phosphoserine).

Belongs to the peroxin-13 family. As to quaternary structure, interacts (via SH3 domain) with PEX14 (via SH3-binding motif); forming the PEX13-PEX14 docking complex. Interacts with PEX19.

It is found in the peroxisome membrane. Functionally, component of the PEX13-PEX14 docking complex, a translocon channel that specifically mediates the import of peroxisomal cargo proteins bound to PEX5 receptor. The PEX13-PEX14 docking complex forms a large import pore which can be opened to a diameter of about 9 nm. Mechanistically, PEX5 receptor along with cargo proteins associates with the PEX14 subunit of the PEX13-PEX14 docking complex in the cytosol, leading to the insertion of the receptor into the organelle membrane with the concomitant translocation of the cargo into the peroxisome matrix. Involved in the import of PTS1- and PTS2-type containing proteins. In Homo sapiens (Human), this protein is Peroxisomal membrane protein PEX13.